A 340-amino-acid polypeptide reads, in one-letter code: Major histocompatibility complex class I-related protein 1 (340 aa).

An N-terminal signal peptide occupies residues 1–22 (MGELTAFLLPLIIVLMVKHSNS). The alpha-1 stretch occupies residues 23–109 (RTHSLRYFRL…KRLQRHYNHS (87 aa)). Residues 23-201 (RTHSLRYFRL…EYGKDTLQRT (179 aa)) form an antigen-binding cleft region. The Extracellular segment spans residues 23-302 (RTHSLRYFRL…QESEAIPLVM (280 aa)). Residues Tyr-29 and Arg-31 each contribute to the 8-(9H-purin-6-yl)-2-oxa-8-azabicyclo[3.3.1]nona-3,6-diene-4,6-dicarbaldehyde site. 5-(2-oxoethylideneamino)-6-(D-ribitylamino)uracil-binding residues include Arg-31, Ser-46, and Lys-65. 3 residues coordinate 5-(2-oxopropylideneamino)-6-(D-ribitylamino)uracil: Arg-31, Ser-46, and Lys-65. Residues Arg-31, Ser-46, and Lys-65 each contribute to the 7-hydroxy-6-methyl-8-(1-D-ribityl)lumazine site. 8-(9H-purin-6-yl)-2-oxa-8-azabicyclo[3.3.1]nona-3,6-diene-4,6-dicarbaldehyde contacts are provided by Lys-65 and His-80. Lys-65 contacts 2-amino-4-oxopteridine-6-carbaldehyde. Lys-65 serves as a coordination point for pyridoxal. Asn-107 carries an N-linked (GlcNAc...) asparagine glycan. The alpha-2 stretch occupies residues 110–201 (GSHTYQRMIG…EYGKDTLQRT (92 aa)). Residue Arg-116 coordinates 8-(9H-purin-6-yl)-2-oxa-8-azabicyclo[3.3.1]nona-3,6-diene-4,6-dicarbaldehyde. Residues Arg-116, Tyr-174, and Gln-175 each contribute to the 5-(2-oxoethylideneamino)-6-(D-ribitylamino)uracil site. 3 residues coordinate 5-(2-oxopropylideneamino)-6-(D-ribitylamino)uracil: Arg-116, Tyr-174, and Gln-175. Arg-116, Tyr-174, and Gln-175 together coordinate 7-hydroxy-6-methyl-8-(1-D-ribityl)lumazine. 2 disulfides stabilise this stretch: Cys-120-Cys-183 and Cys-222-Cys-278. The interval 202–293 (EPPLVRVNRK…GVHVVLQVPQ (92 aa)) is alpha-3. Positions 203–282 (PPLVRVNRKE…SNLYSCHVEH (80 aa)) constitute an Ig-like C1-type domain. Positions 294–302 (ESEAIPLVM) are connecting peptide. Residues 303–323 (KAVSGSIVFVIVLAGVGVLVW) traverse the membrane as a helical segment. Topologically, residues 324 to 340 (RRRPREQNGAVYLPTPD) are cytoplasmic.

The protein belongs to the MHC class I family. Heterotrimer that consists of MR1, B2M and metabolite antigen. Major classes of metabolite ligands presented by MR1 include riboflavin-related antigens, pyrimidines and ribityl lumazines, nucleobase adducts and folate derivatives. Forms reversible covalent Schiff base complexes with microbial pyrimidine-based metabolite, which serves as a molecular switch triggering complete folding, stable association with B2M and translocation of the ternary complex from endoplasmic reticulum to the plasma membrane. Alternatively, forms non-Schiff base complexes with ribityl lumazines. On antigen-presenting cells, the ternary complex interacts with TCR on MR1-restricted T cells. Interacts with TAPBP and TAPBPL chaperones in the endoplasmic reticulum. TAPBP associated or not with MHC class I peptide loading complex binds ligand-free MR1 or MR1-B2M complex, providing for stable MR1 pools ready for metabolite antigen processing. TAPBPL interacts with MR1 in a ligand-independent way; this interaction may stabilize MR1 pool and facilitate ligand loading and dissociation. Structurally, MR1-B2M heterodimer adopts a topology similar to classical MHC class I molecules, with alpha-1 and alpha-2 domains of MR1 forming the antigen-binding cleft composed of two alpha-helices resting on a floor of 7-stranded anti-parallel beta-pleated sheet. MR1-B2M heterodimer (via alpha-helices) interacts with TCR (via CDR domains). Post-translationally, N-glycosylated.

The protein localises to the cell membrane. It localises to the endoplasmic reticulum membrane. The protein resides in the golgi apparatus membrane. It is found in the early endosome membrane. Its subcellular location is the late endosome membrane. Antigen-presenting molecule specialized in displaying microbial pyrimidine-based metabolites to alpha-beta T cell receptors (TCR) on innate-type mucosal-associated invariant T (MAIT) cells. In complex with B2M preferentially presents riboflavin-derived metabolites to semi-invariant TCRs on MAIT cells, guiding immune surveillance of the microbial metabolome at mucosal epithelial barriers. Signature pyrimidine-based microbial antigens are generated via non-enzymatic condensation of metabolite intermediates of the riboflavin pathway with by-products arising from other metabolic pathways such as glycolysis. Typical potent antigenic metabolites are 5-(2-oxoethylideneamino)-6-D-ribitylaminouracil (5-OE-RU) and 5-(2-oxopropylideneamino)-6-D-ribitylaminouracil (5-OP-RU), products of condensation of 5-amino-6-D-ribityaminouracil (5-A-RU) with glyoxal or methylglyoxal by-products, respectively. May present microbial antigens to various MAIT cell subsets, providing for unique recognition of diverse microbes, including pathogens that do not synthesize riboflavin. Upon antigen recognition, elicits rapid innate-type MAIT cell activation to eliminate pathogenic microbes by directly killing infected cells. During T cell development, drives thymic selection and post-thymic terminal differentiation of MAIT cells in a process dependent on commensal microflora. Acts as an immune sensor of cancer cell metabolome. May present a tumor-specific or -associated metabolite essential for cancer cell survival to a pan-cancer TCR on a non-MAIT CD8-positive T cell clone, triggering T cell-mediated killing of a wide range of cancer cell types. May present tumor-enriched pyridoxal and pyridoxal 5'-phosphate antigens, enabling preferential recognition of cancer cells. Presents nucleobase carbonyl adducts generated during oxidative stress. Captures M3Ade, a nucleobase adduct composed of one adenine modified by a malondialdehyde trimer, for recognition by MR1-restricted T cell clones expressing a polyclonal TCR repertoire. In Pongo abelii (Sumatran orangutan), this protein is Major histocompatibility complex class I-related protein 1.